A 324-amino-acid polypeptide reads, in one-letter code: MELPADGSALARQGSIYSLTFDEFQSALGSAEKDFGSMNMDELLRNIWTAEESQAIAPAAAAASAAAVVGDAQQQQQPIQRQGSLTLPRTLSQKTVDEVWRDIMGLGGSDDEDPAAAAAAAAPAQRQPTLGEMTLEEFLVRAGVVREDMGQTIVLPPQAQALFPGSNVVAPAMQLANGMLPGVVGVAPGAAAAMTVAAPATPVVLNGLGKVEGGDLSSLSPVPYPFDTALRVRKGPTVEKVVERRQRRMIKNRESAARSRARKQAYIMELEAEVAKLKEQKAELQKKQVEMIQKQNDEVMERITQQLGPKAKRFCLRRTLTGPC.

Positions 106–127 (LGGSDDEDPAAAAAAAAPAQRQ) are disordered. A compositionally biased stretch (low complexity) spans 115–124 (AAAAAAAAPA). Residues 242 to 287 (VERRQRRMIKNRESAARSRARKQAYIMELEAEVAKLKEQKAELQKK) form the bZIP domain. A basic motif region spans residues 244–263 (RRQRRMIKNRESAARSRARK). The interval 270 to 284 (LEAEVAKLKEQKAEL) is leucine-zipper.

As to quaternary structure, interacts with MODD. Interacts with SAPK2, SAPK6 and SAPK9. Post-translationally, phosphorylated on serine and threonine residues by SAPK2, SAPK6 and SAPK9. Phosphorylation is required for full transactivation activity. In terms of tissue distribution, expressed in roots, shoots, leaves, flag leaves, stems, flowers and panicles. Widely expressed.

It is found in the nucleus. In terms of biological role, transcription factor involved in abscisic acid (ABA) signaling pathway. Transcription factor activity is fully activated by ABA. Acts as a positive regulator of the expression of abiotic stress-responsive genes through an ABA-dependent signaling pathway. Acts as a positive regulator of ABA signaling and drought stress tolerance. Plays an important role in ABA and auxin responses. Involved in ABA signaling and stress responses by directly binding to the ABA-responsive element (ABRE)-containing genes, especially WRKY family genes. Modulates response to auxin. Suppresses auxin signaling by targeting ABRE-containing genes related to auxin metabolism or signaling. The sequence is that of bZIP transcription factor 46 from Oryza sativa subsp. japonica (Rice).